We begin with the raw amino-acid sequence, 147 residues long: Large ribosomal subunit protein bL9 (147 aa).

It belongs to the bacterial ribosomal protein bL9 family.

Functionally, binds to the 23S rRNA. This chain is Large ribosomal subunit protein bL9, found in Marinomonas sp. (strain MWYL1).